The chain runs to 473 residues: Aspartyl/glutamyl-tRNA(Asn/Gln) amidotransferase subunit B (473 aa).

This sequence belongs to the GatB/GatE family. GatB subfamily. In terms of assembly, heterotrimer of A, B and C subunits.

It catalyses the reaction L-glutamyl-tRNA(Gln) + L-glutamine + ATP + H2O = L-glutaminyl-tRNA(Gln) + L-glutamate + ADP + phosphate + H(+). The catalysed reaction is L-aspartyl-tRNA(Asn) + L-glutamine + ATP + H2O = L-asparaginyl-tRNA(Asn) + L-glutamate + ADP + phosphate + 2 H(+). Its function is as follows. Allows the formation of correctly charged Asn-tRNA(Asn) or Gln-tRNA(Gln) through the transamidation of misacylated Asp-tRNA(Asn) or Glu-tRNA(Gln) in organisms which lack either or both of asparaginyl-tRNA or glutaminyl-tRNA synthetases. The reaction takes place in the presence of glutamine and ATP through an activated phospho-Asp-tRNA(Asn) or phospho-Glu-tRNA(Gln). This chain is Aspartyl/glutamyl-tRNA(Asn/Gln) amidotransferase subunit B, found in Mycoplasmopsis synoviae (strain 53) (Mycoplasma synoviae).